We begin with the raw amino-acid sequence, 173 residues long: Alpha-crystallin A chain (173 aa).

Methionine 1 carries the post-translational modification N-acetylmethionine. The tract at residues 1–63 is required for complex formation with BFSP1 and BFSP2; the sequence is MDVTIQHPWF…RTVLDSGISE (63 aa). Glutamine 6 is subject to Deamidated glutamine; partial. Serine 45 is subject to Phosphoserine. Glutamine 50 carries the post-translational modification Deamidated glutamine; partial. The sHSP domain maps to 52-162; sequence LFRTVLDSGI…GHSERAIPVS (111 aa). Lysine 70 and lysine 99 each carry N6-acetyllysine. Position 100 (histidine 100) interacts with Zn(2+). The residue at position 101 (asparagine 101) is a Deamidated asparagine; partial. Positions 102 and 107 each coordinate Zn(2+). Serine 122 bears the Phosphoserine mark. Asparagine 123 carries the deamidated asparagine; partial modification. The segment at 145-173 is disordered; sequence KVQSGLDAGHSERAIPVSREEKPSSAPSS. A Deamidated glutamine; partial modification is found at glutamine 147. Over residues 153–167 the composition is skewed to basic and acidic residues; it reads GHSERAIPVSREEKP. Histidine 154 serves as a coordination point for Zn(2+). The O-linked (GlcNAc) serine glycan is linked to serine 162.

It belongs to the small heat shock protein (HSP20) family. As to quaternary structure, heteromer composed of three CRYAA and one CRYAB subunits. Inter-subunit bridging via zinc ions enhances stability, which is crucial as there is no protein turn over in the lens. Can also form homodimers and homotetramers (dimers of dimers) which serve as the building blocks of homooligomers. Within homooligomers, the zinc-binding motif is created from residues of 3 different molecules. His-100 and Glu-102 from one molecule are ligands of the zinc ion, and His-107 and His-154 residues from additional molecules complete the site with tetrahedral coordination geometry. Part of a complex required for lens intermediate filament formation composed of BFSP1, BFSP2 and CRYAA. Acetylation at Lys-70 may increase chaperone activity. Post-translationally, undergoes age-dependent proteolytical cleavage at the C-terminus.

It is found in the cytoplasm. The protein localises to the nucleus. In terms of biological role, contributes to the transparency and refractive index of the lens. Acts as a chaperone, preventing aggregation of various proteins under a wide range of stress conditions. Required for the correct formation of lens intermediate filaments as part of a complex composed of BFSP1, BFSP2 and CRYAA. The polypeptide is Alpha-crystallin A chain (CRYAA) (Meriones unguiculatus (Mongolian jird)).